The following is a 375-amino-acid chain: Alcohol dehydrogenase 6 (375 aa).

Cys47, His69, Cys99, Cys102, Cys105, Cys113, and Cys175 together coordinate Zn(2+). NAD(+) is bound by residues 200–205 (GLGGVG), Asp224, Lys229, 293–295 (VGS), and Arg370.

It belongs to the zinc-containing alcohol dehydrogenase family. Class-V subfamily. As to quaternary structure, dimer. Zn(2+) serves as cofactor. As to expression, liver.

The protein localises to the cytoplasm. It carries out the reaction a primary alcohol + NAD(+) = an aldehyde + NADH + H(+). The catalysed reaction is a secondary alcohol + NAD(+) = a ketone + NADH + H(+). In terms of biological role, alcohol dehydrogenase. Catalyzes the NAD-dependent oxidation of primary alcohols to the corresponding aldehydes. Oxidizes secondary alcohols to the corresponding ketones. This Peromyscus maniculatus (North American deer mouse) protein is Alcohol dehydrogenase 6 (ADH6).